A 342-amino-acid chain; its full sequence is tRNA N6-adenosine threonylcarbamoyltransferase (342 aa).

Residues H111 and H115 each coordinate Fe cation. Residues 134-138 (LVSGG), D167, G180, and N276 contribute to the substrate site. A Fe cation-binding site is contributed by D304.

Belongs to the KAE1 / TsaD family. The cofactor is Fe(2+).

The protein resides in the cytoplasm. It carries out the reaction L-threonylcarbamoyladenylate + adenosine(37) in tRNA = N(6)-L-threonylcarbamoyladenosine(37) in tRNA + AMP + H(+). Functionally, required for the formation of a threonylcarbamoyl group on adenosine at position 37 (t(6)A37) in tRNAs that read codons beginning with adenine. Is involved in the transfer of the threonylcarbamoyl moiety of threonylcarbamoyl-AMP (TC-AMP) to the N6 group of A37, together with TsaE and TsaB. TsaD likely plays a direct catalytic role in this reaction. The protein is tRNA N6-adenosine threonylcarbamoyltransferase of Helicobacter acinonychis (strain Sheeba).